The sequence spans 67 residues: Probable archaeal histone 3 (67 aa).

Interaction with DNA stretches follow at residues 20-22 and 54-57; these read RVS and KTVK.

The protein belongs to the archaeal histone HMF family. In terms of assembly, homodimer or heterodimer with another histone. Dimers then assemble into higher oligomers, with the DNA wrapped around the protein core.

The protein localises to the cytoplasm. It localises to the chromosome. Functionally, binds and compact DNA (95 to 150 base pairs) to form nucleosome-like structures that contain positive DNA supercoils. Increases the resistance of DNA to thermal denaturation (in vitro). The polypeptide is Probable archaeal histone 3 (Methanocaldococcus jannaschii (strain ATCC 43067 / DSM 2661 / JAL-1 / JCM 10045 / NBRC 100440) (Methanococcus jannaschii)).